The following is a 428-amino-acid chain: ORC1-type DNA replication protein 5 (428 aa).

Residues 62-66, tyrosine 219, and arginine 231 each bind ATP; that span reads TGKSL.

The protein belongs to the CDC6/cdc18 family.

Involved in regulation of DNA replication. This is ORC1-type DNA replication protein 5 (orc5) from Halobacterium salinarum (strain ATCC 700922 / JCM 11081 / NRC-1) (Halobacterium halobium).